Here is a 1101-residue protein sequence, read N- to C-terminus: Translation initiation factor IF-2 (1101 aa).

Disordered regions lie at residues 81-437 and 452-509; these read QEIL…EDDF and SIST…QRAE. A compositionally biased stretch (polar residues) spans 93 to 108; it reads PFSSTDAPVGSGQSSP. A compositionally biased stretch (pro residues) spans 110–124; sequence IEPPRPPMKPQPPSP. Polar residues-rich tracts occupy residues 128-149 and 157-184; these read EVTS…GSSS and SPMS…QLKY. Residues 185–196 show a composition bias toward low complexity; that stretch reads NQEQSNQLEQES. The segment covering 197–206 has biased composition (polar residues); the sequence is AISSELSEVN. 3 stretches are compositionally biased toward basic and acidic residues: residues 228 to 237, 248 to 288, and 295 to 340; these read SKEKEAKSNE, KENK…DKKS, and VKRE…ELKR. A compositionally biased stretch (acidic residues) spans 361–378; it reads EPEDVEDTAEDLLEEDPL. Composition is skewed to basic residues over residues 385–397 and 414–428; these read PKLK…KVGK and KAGK…KRRQ. Over residues 484–506 the composition is skewed to basic and acidic residues; sequence EPGRGKSAERERSERKDRKEQPQ. Positions 592-765 constitute a tr-type G domain; that stretch reads RRPPVVTIMG…LLVAEVGELS (174 aa). The segment at 601 to 608 is G1; the sequence is GHVDHGKT. 601 to 608 serves as a coordination point for GTP; sequence GHVDHGKT. The G2 stretch occupies residues 626 to 630; it reads GITQH. The tract at residues 651-654 is G3; the sequence is DTPG. Residues 651-655 and 705-708 contribute to the GTP site; these read DTPGH and NKID. The tract at residues 705-708 is G4; sequence NKID. A G5 region spans residues 741-743; it reads SAL.

This sequence belongs to the TRAFAC class translation factor GTPase superfamily. Classic translation factor GTPase family. IF-2 subfamily.

Its subcellular location is the cytoplasm. In terms of biological role, one of the essential components for the initiation of protein synthesis. Protects formylmethionyl-tRNA from spontaneous hydrolysis and promotes its binding to the 30S ribosomal subunits. Also involved in the hydrolysis of GTP during the formation of the 70S ribosomal complex. This is Translation initiation factor IF-2 from Gloeothece citriformis (strain PCC 7424) (Cyanothece sp. (strain PCC 7424)).